Consider the following 182-residue polypeptide: Adenine phosphoribosyltransferase (182 aa).

It belongs to the purine/pyrimidine phosphoribosyltransferase family. In terms of assembly, homodimer.

It localises to the cytoplasm. It carries out the reaction AMP + diphosphate = 5-phospho-alpha-D-ribose 1-diphosphate + adenine. Its pathway is purine metabolism; AMP biosynthesis via salvage pathway; AMP from adenine: step 1/1. In terms of biological role, catalyzes a salvage reaction resulting in the formation of AMP, that is energically less costly than de novo synthesis. This is Adenine phosphoribosyltransferase from Bordetella pertussis (strain Tohama I / ATCC BAA-589 / NCTC 13251).